The sequence spans 304 residues: Glycine--tRNA ligase alpha subunit (304 aa).

Belongs to the class-II aminoacyl-tRNA synthetase family. As to quaternary structure, tetramer of two alpha and two beta subunits.

It localises to the cytoplasm. It catalyses the reaction tRNA(Gly) + glycine + ATP = glycyl-tRNA(Gly) + AMP + diphosphate. This chain is Glycine--tRNA ligase alpha subunit, found in Pectobacterium atrosepticum (strain SCRI 1043 / ATCC BAA-672) (Erwinia carotovora subsp. atroseptica).